The following is a 443-amino-acid chain: ATP-dependent protease ATPase subunit HslU (443 aa).

Residues Ile18, 60-65 (GVGKTE), Asp256, Glu321, and Arg393 contribute to the ATP site.

This sequence belongs to the ClpX chaperone family. HslU subfamily. As to quaternary structure, a double ring-shaped homohexamer of HslV is capped on each side by a ring-shaped HslU homohexamer. The assembly of the HslU/HslV complex is dependent on binding of ATP.

Its subcellular location is the cytoplasm. Its function is as follows. ATPase subunit of a proteasome-like degradation complex; this subunit has chaperone activity. The binding of ATP and its subsequent hydrolysis by HslU are essential for unfolding of protein substrates subsequently hydrolyzed by HslV. HslU recognizes the N-terminal part of its protein substrates and unfolds these before they are guided to HslV for hydrolysis. In Pasteurella multocida (strain Pm70), this protein is ATP-dependent protease ATPase subunit HslU.